The sequence spans 111 residues: Large ribosomal subunit protein P2w (111 aa).

Positions 63 to 111 (ASVPSGGGVAVSAAPSSGGGGAAAPAEKKEAKKEEKEESDDDMGFSLFE) are disordered. The span at 88 to 98 (AEKKEAKKEEK) shows a compositional bias: basic and acidic residues. The residue at position 101 (Ser101) is a Phosphoserine.

This sequence belongs to the eukaryotic ribosomal protein P1/P2 family. P1 and P2 exist as dimers at the large ribosomal subunit.

Plays an important role in the elongation step of protein synthesis. The protein is Large ribosomal subunit protein P2w (RPP2D) of Arabidopsis thaliana (Mouse-ear cress).